The following is a 736-amino-acid chain: Zinc finger MYND domain-containing protein 15 (736 aa).

2 disordered regions span residues 70 to 94 (SLGQ…DEPP) and 109 to 192 (LEDG…KNAE). Residues 110–123 (EDGEEGEEEEEDEE) show a composition bias toward acidic residues. Basic and acidic residues-rich tracts occupy residues 124–135 (HGERPGMEKVEP) and 165–185 (ASRE…PEKR). Residues Cys-307, Cys-310, Cys-322, Cys-325, Cys-331, Cys-335, His-349, and Cys-353 each coordinate Zn(2+). The segment at 307–353 (CHVCHKHSFEVKLTPCPQCSAVLYCGEACLQADWRRCPDDVSHRFWC) adopts an MYND-type zinc-finger fold. Disordered stretches follow at residues 556-583 (DGPE…GGRR) and 696-736 (GGTV…RRRR). Residues 704 to 718 (GPAPRPPTPAAPPVP) are compositionally biased toward pro residues. Over residues 719-736 (ARRRRGEKKAARGPRRRR) the composition is skewed to basic residues.

In terms of assembly, interacts with HDAC1, HDAC3, HDAC6 and, to a lesser extent, with HDAC7. In terms of tissue distribution, testis-specific. Expressed in pachytene spermatocytes and all developing spermatids, but not in Sertoli, nor Leydig cells (at protein level).

Its subcellular location is the nucleus. It localises to the cytoplasm. Its function is as follows. Acts as a transcriptional repressor through interaction with histone deacetylases (HDACs). May regulate haploid genes important for spermiogenesis. This is Zinc finger MYND domain-containing protein 15 (Zmynd15) from Mus musculus (Mouse).